Reading from the N-terminus, the 1077-residue chain is MLSAGSIDVSSQNIAVAGSSVVADKDIRLRAQENLTVSTAQQSESGTQLFEQKKSGLMSTGGIGVFIGTSRQKTTDQTQTVSHIGSTVGSLTGNVRLEAGNQLTLHGSDVVAGKDLALTGADVAISAAENSRSQQYTAESKQSGLTVALSGPVGSAVNTAVTTAKAAREENTGRLAGLQGVKAALSGVQAVQAGQLVQAQGGGITEMVGVSVSLGSQKSSSQQQQEQTQVSGSALTAGNNLSIKATGGGNAANSGDILIAGSQLKAGGDTRLDAARDVQLLGAANRQKTDGSNSSRGGSIGVSVGGSGLSVFANANKGQGNERGDGTFWTETTVDSGGMFSLRSGRDTTLTGAQVSAETVKADVGRNLTLQSQQDRDNYDAKQSRASGGISVPVAGGGAAVNLSMSRDRLSSQYDSVQAQTGIFAGSGGVDIRVGEHTQLDGAVIASTAAADKNTLDTGTLGFSDIKNKAVFTVEHQGGSLSTGGPVGSDLLSNLGGMVLAGLGNGGYAEGTTQAAVSEGTITVRDTENQQQNVDDLSRDTGNANGSIGPIFDKEKEQNRLKEVQLIGEIGGQALDIASTQGKIIATHAANDKMKAVKPEDIVAAEKQWEKAHPGKAATAEDINQQIYQTAYNQAFNESGFGTGGPVQRGMQAAIAAVQGLAGGNMGAALTGASAPYLAGVIKQSTGDNPAANTMAHAVLGAVTAYASGNHALAGAAGAATAELMAPTIISALGWDKNTLTEGQKQAVSALSTLAAGLAGGLTGDSTADALAGGQAGKNAVENNYLNSTQALTFDKELSDCRKSGGNCQAVIDKWKKVSDEQSVKLDETLKNNPLEAQVWDKEVAQGGIAITERPGWLSSLGADVMSSEEAKAYVQQWNGQDLSKIDVNSPGWTKFAAFASDPENQVAVASLGMLGKDLTKAALSYMGRNTSTATVSASSVGMKWGQGNMKQGMPWEDYVGKTLPVGSRLPPNFKTYDYFDRATGAVVSAKSLDTQTMAKLSNPNQVYSSIKKNIDVTAKFEKASLSGVTVNSSMITSKEVRLAVPVNTTKAQWTEINRAIEYGKNQGVKVTVTQVK.

Residues 67–384 (IGTSRQKTTD…DRDNYDAKQS (318 aa)) are FHA-2. Positions 531–546 (QQNVDDLSRDTGNANG) are enriched in polar residues. Residues 531-555 (QQNVDDLSRDTGNANGSIGPIFDKE) are disordered. Positions 781-784 (VENN) match the VENN CT cleavage motif motif. Residues 954–1077 (MPWEDYVGKT…GVKVTVTQVK (124 aa)) are DNase activity.

As to quaternary structure, interacts with cognate immunity protein CdiI-YPIII, which blocks its toxic DNase activity. Zn(2+) serves as cofactor.

It localises to the target cell. Its subcellular location is the target cell cytoplasm. Toxic component of a toxin-immunity protein module, which functions as a cellular contact-dependent growth inhibition (CDI) system. CDI modules allow bacteria to communicate with and inhibit the growth of closely related neighboring bacteria in a contact-dependent fashion. The C-terminal 123 residues (954-1077) has DNase activity in the presence of Zn(2+), converting supercoiled DNA into open-circular form. Toxic activity is neutralized by coexpression of the cognate immunity protein CdiI-YPIII, but not by non-cognate immunity proteins from other toxin-immunity modules. Expression of the DNase domain as a chimera allows bacteria to attack other non-immune bacteria which become filamentous and have lost DNA staining. Functionally, the CdiA protein is thought to be exported from the cell through the central lumen of CdiB, the other half of its two-partner system (TPS). The TPS domain probably remains associated with CdiB while the FHA-1 domain forms an extended filament with the receptor-binding domain (RBD) at its extremity; in the secretion arrested state the C-terminus of the RBD and YP domains form a hairpin-like structure as the FHA-2, PT and CT domains are periplasmic. The YP domain is probably responsible for this arrest at the point where it re-enters the host cell periplasm. Upon binding to a target cell outer membrane receptor a signal is transmitted to activate secretion. The filament elongates slightly, the rest of CdiA is secreted and the FHA-2 domain becomes stably associated with the target cell's outer membrane where it facilitates entry of the toxic CT domain into the target cell periplasm. From there the toxic CT domain is cleaved and gains access to the target cell cytoplasm via an inner membrane protein. This Yersinia pseudotuberculosis serotype O:3 (strain YPIII) protein is Deoxyribonuclease CdiA.